The following is a 590-amino-acid chain: Zinc finger protein 285 (590 aa).

Residues 8 to 86 (VTFKDVAVVF…WKQRIRDLTV (79 aa)) form the KRAB domain. The segment at 232 to 254 (FPCNNCGVAFADDTDPHVHHSTH) adopts a C2H2-type 1 zinc-finger fold. The C2H2-type 2; degenerate zinc-finger motif lies at 260 to 282 (YKCDQYGKNFSQSQDLIVHCKTH). 9 consecutive C2H2-type zinc fingers follow at residues 316 to 338 (YKCKECGKGFRRSSSLHNHHRVH), 344 to 366 (YKCDECGKGFGFRSLLCIHQGVH), 372 to 394 (YKCEECGKGFDQSSNLLVHQRVH), 400 to 422 (YKCSECGKCFSSSSVLQVHWRFH), 428 to 450 (YRCGECGKGFSQCTHLHIHQRVH), 456 to 478 (YKCNVCGKDFAYSSVLHTHQRVH), 484 to 506 (YKCEVCGKCFSYSSYFHLHQRDH), 512 to 534 (YKCDECGKGFSRNSDLNVHLRVH), and 540 to 562 (YKCKACGKGFSRNSYLLAHQRVH).

The protein belongs to the krueppel C2H2-type zinc-finger protein family.

The protein resides in the nucleus. Its function is as follows. May be involved in transcriptional regulation. The chain is Zinc finger protein 285 (ZNF285) from Homo sapiens (Human).